Here is a 1040-residue protein sequence, read N- to C-terminus: Multidrug resistance protein MdtB (1040 aa).

Helical transmembrane passes span 16–36, 342–362, 369–389, 396–416, 440–460, 472–492, 537–557, 869–889, 890–910, 911–931, 968–988, and 998–1018; these read FIMRPVATTLLMVAILIAGII, DTQFELMLAMALVVMIIYVFL, IIPAVAVPLSLVGTFAVMVFL, LTLMALTIATGFVVDDAIVVI, IGFTIISLTFSLIAVLIPLLF, FAVTLAVAILISAVVSLTLTP, WATLSVALGTLALSVMLWIVI, LIVAAVVAMYIVLGVLYESFI, HPVTILSTLPTAGVGALLALM, LSGSELDVIAIIGIILLIGIV, ILMTTMAALLGALPLMLSTGV, and IGMVGGLLVSQVLTLFTTPVI.

Belongs to the resistance-nodulation-cell division (RND) (TC 2.A.6) family. MdtB subfamily. Part of a tripartite efflux system composed of MdtA, MdtB and MdtC. MdtB forms a heteromultimer with MdtC.

It localises to the cell inner membrane. The sequence is that of Multidrug resistance protein MdtB from Enterobacter sp. (strain 638).